Reading from the N-terminus, the 629-residue chain is tRNA uridine 5-carboxymethylaminomethyl modification enzyme MnmG (629 aa).

FAD contacts are provided by residues 18 to 23 (GGGHAG), valine 130, and serine 188. Position 280 to 294 (280 to 294 (GPRYCPSIEDKVVRF)) interacts with NAD(+). Residue glutamine 377 coordinates FAD.

Belongs to the MnmG family. As to quaternary structure, homodimer. Heterotetramer of two MnmE and two MnmG subunits. FAD is required as a cofactor.

Its subcellular location is the cytoplasm. Its function is as follows. NAD-binding protein involved in the addition of a carboxymethylaminomethyl (cmnm) group at the wobble position (U34) of certain tRNAs, forming tRNA-cmnm(5)s(2)U34. The sequence is that of tRNA uridine 5-carboxymethylaminomethyl modification enzyme MnmG from Granulibacter bethesdensis (strain ATCC BAA-1260 / CGDNIH1).